The sequence spans 200 residues: Recombination protein RecR (200 aa).

A C4-type zinc finger spans residues 57 to 72 (CQECRTFTEQDVCHIC). The region spanning 81 to 176 (GQLCVVESPA…TASRIAHGVP (96 aa)) is the Toprim domain.

The protein belongs to the RecR family.

Its function is as follows. May play a role in DNA repair. It seems to be involved in an RecBC-independent recombinational process of DNA repair. It may act with RecF and RecO. The chain is Recombination protein RecR from Vibrio cholerae serotype O1 (strain ATCC 39541 / Classical Ogawa 395 / O395).